The sequence spans 204 residues: Protein LURP-one-related 14 (204 aa).

The protein belongs to the LOR family.

Might be related to the phospholipid scramblase and tubby-like superfamily of membrane tethered transcription factors. The sequence is that of Protein LURP-one-related 14 from Arabidopsis thaliana (Mouse-ear cress).